The sequence spans 99 residues: NADH-quinone oxidoreductase subunit K (99 aa).

Transmembrane regions (helical) follow at residues 2–22 (PVEY…LGVL), 28–48 (LILM…FLAF), and 60–80 (IAFF…AVVI).

The protein belongs to the complex I subunit 4L family. NDH-1 is composed of 14 different subunits. Subunits NuoA, H, J, K, L, M, N constitute the membrane sector of the complex.

Its subcellular location is the cell inner membrane. The enzyme catalyses a quinone + NADH + 5 H(+)(in) = a quinol + NAD(+) + 4 H(+)(out). In terms of biological role, NDH-1 shuttles electrons from NADH, via FMN and iron-sulfur (Fe-S) centers, to quinones in the respiratory chain. The immediate electron acceptor for the enzyme in this species is believed to be ubiquinone. Couples the redox reaction to proton translocation (for every two electrons transferred, four hydrogen ions are translocated across the cytoplasmic membrane), and thus conserves the redox energy in a proton gradient. The polypeptide is NADH-quinone oxidoreductase subunit K (Anaeromyxobacter dehalogenans (strain 2CP-1 / ATCC BAA-258)).